The primary structure comprises 391 residues: Succinate--CoA ligase [ADP-forming] subunit beta (391 aa).

The ATP-grasp domain maps to 9 to 237; that stretch reads RDLFEKHGVP…RATTDPLELR (229 aa). Residues lysine 46, 53–55, alanine 95, and glutamate 100 contribute to the ATP site; that span reads GRG. Mg(2+) is bound by residues asparagine 192 and aspartate 206. Substrate is bound by residues asparagine 257 and 320 to 322; that span reads GIT.

Belongs to the succinate/malate CoA ligase beta subunit family. Heterotetramer of two alpha and two beta subunits. Mg(2+) serves as cofactor.

The catalysed reaction is succinate + ATP + CoA = succinyl-CoA + ADP + phosphate. It carries out the reaction GTP + succinate + CoA = succinyl-CoA + GDP + phosphate. It functions in the pathway carbohydrate metabolism; tricarboxylic acid cycle; succinate from succinyl-CoA (ligase route): step 1/1. Its function is as follows. Succinyl-CoA synthetase functions in the citric acid cycle (TCA), coupling the hydrolysis of succinyl-CoA to the synthesis of either ATP or GTP and thus represents the only step of substrate-level phosphorylation in the TCA. The beta subunit provides nucleotide specificity of the enzyme and binds the substrate succinate, while the binding sites for coenzyme A and phosphate are found in the alpha subunit. This is Succinate--CoA ligase [ADP-forming] subunit beta from Cutibacterium acnes (strain DSM 16379 / KPA171202) (Propionibacterium acnes).